Reading from the N-terminus, the 115-residue chain is Nitrogenase-stabilizing/protective protein NifW (115 aa).

This sequence belongs to the NifW family. Homotrimer; associates with NifD.

In terms of biological role, may protect the nitrogenase Fe-Mo protein from oxidative damage. This is Nitrogenase-stabilizing/protective protein NifW from Stutzerimonas stutzeri (strain A1501) (Pseudomonas stutzeri).